The chain runs to 442 residues: ATP-dependent RNA helicase SUB2 (442 aa).

A Q motif motif is present at residues 59 to 87 (TGFRDFLLKGELLRAITDCGFEHPSEVQQ). Residues 90–265 (IPTAILNVDV…KKFMRNPLEV (176 aa)) form the Helicase ATP-binding domain. Residue 103–110 (AKSGLGKT) participates in ATP binding. Residues 212-215 (DECD) carry the DECD box motif. Residues 293–438 (KLNELLDSLE…EYPQGGVDSS (146 aa)) form the Helicase C-terminal domain.

It belongs to the DEAD box helicase family. DECD subfamily.

The protein localises to the nucleus. The catalysed reaction is ATP + H2O = ADP + phosphate + H(+). Functionally, ATP-binding RNA helicase involved in transcription elongation and required for the export of mRNA out of the nucleus. SUB2 also plays a role in pre-mRNA splicing and spliceosome assembly. May be involved in rDNA and telomeric silencing, and maintenance of genome integrity. This Ajellomyces capsulatus (strain NAm1 / WU24) (Darling's disease fungus) protein is ATP-dependent RNA helicase SUB2 (SUB2).